Reading from the N-terminus, the 368-residue chain is Propane 2-monooxygenase, hydroxylase component small subunit (368 aa).

The protein belongs to the TmoE/XamoE family. As to quaternary structure, the propane 2-monooxygenase multicomponent enzyme system is composed of an electron transfer component and a monooxygenase component interacting with the effector protein MimD. The electron transfer component is composed of a reductase (MimB), and the monooxygenase component is formed by a large subunit (MimA) and a small subunit (MimC). Requires the presence of the chaperonin-like protein MimG to ensure a productive folding, resulting of a soluble MimC, which leads to the active form of MimABCD.

It carries out the reaction propane + NADH + O2 + H(+) = propan-2-ol + NAD(+) + H2O. It catalyses the reaction acetone + NADH + O2 + H(+) = hydroxyacetone + NAD(+) + H2O. The catalysed reaction is butan-2-one + NADH + O2 + H(+) = 1-hydroxy-2-butanone + NAD(+) + H2O. The enzyme catalyses phenol + NADH + O2 + H(+) = hydroquinone + NAD(+) + H2O. Functionally, component of the propane 2-monooxygenase multicomponent enzyme system which is involved in the degradation of propane via the O2-dependent hydroxylation of propane. Also involved in the degradation of acetone via the O2-dependent hydroxylation of acetone. Also able to catalyze the oxidation of phenol, methylethylketone (2-butanone), 1-propanol and 2-propanol. The sequence is that of Propane 2-monooxygenase, hydroxylase component small subunit from Mycolicibacterium goodii (Mycobacterium goodii).